The chain runs to 145 residues: Large ribosomal subunit protein mL43 (145 aa).

Belongs to the mitochondrion-specific ribosomal protein mL43 family. In terms of assembly, component of the mitochondrial large ribosomal subunit (mt-LSU). Mature yeast 74S mitochondrial ribosomes consist of a small (37S) and a large (54S) subunit. The 37S small subunit contains a 15S ribosomal RNA (15S mt-rRNA) and at least 32 different proteins. The 54S large subunit contains a 21S rRNA (21S mt-rRNA) and at least 45 different proteins.

The protein localises to the mitochondrion. Component of the mitochondrial ribosome (mitoribosome), a dedicated translation machinery responsible for the synthesis of mitochondrial genome-encoded proteins, including at least some of the essential transmembrane subunits of the mitochondrial respiratory chain. The mitoribosomes are attached to the mitochondrial inner membrane and translation products are cotranslationally integrated into the membrane. Also has an extraribosomal function, being essential for mitochondrial genome integrity. May interact with MHR1 to take part in the mtDNA repair mechanism. The sequence is that of Large ribosomal subunit protein mL43 (mrpl51) from Schizosaccharomyces pombe (strain 972 / ATCC 24843) (Fission yeast).